The following is a 142-amino-acid chain: uncharacterized protein (142 aa).

The 138-residue stretch at Met-1–Ala-138 folds into the N-acetyltransferase domain.

This is an uncharacterized protein from Bacillus subtilis (strain 168).